We begin with the raw amino-acid sequence, 237 residues long: Flagellar L-ring protein (237 aa).

A signal peptide spans 1–24 (MNRLSVPRFSVLIASLCGITLLSG). A lipid anchor (N-palmitoyl cysteine) is attached at Cys25. A lipid anchor (S-diacylglycerol cysteine) is attached at Cys25.

Belongs to the FlgH family. As to quaternary structure, the basal body constitutes a major portion of the flagellar organelle and consists of four rings (L,P,S, and M) mounted on a central rod.

The protein localises to the cell outer membrane. Its subcellular location is the bacterial flagellum basal body. Assembles around the rod to form the L-ring and probably protects the motor/basal body from shearing forces during rotation. The polypeptide is Flagellar L-ring protein (Pseudomonas syringae pv. syringae (strain B728a)).